The following is a 151-amino-acid chain: Large ribosomal subunit protein bL9 (151 aa).

This sequence belongs to the bacterial ribosomal protein bL9 family.

Functionally, binds to the 23S rRNA. This is Large ribosomal subunit protein bL9 from Thermosipho africanus (strain TCF52B).